We begin with the raw amino-acid sequence, 239 residues long: Alpha-acetolactate decarboxylase (239 aa).

It belongs to the alpha-acetolactate decarboxylase family.

It catalyses the reaction (2S)-2-acetolactate + H(+) = (R)-acetoin + CO2. It functions in the pathway polyol metabolism; (R,R)-butane-2,3-diol biosynthesis; (R,R)-butane-2,3-diol from pyruvate: step 2/3. With respect to regulation, the enzyme is active only in the presence of branched-chain amino acids. Valine results in much higher activation than leucine or isoleucine. Functionally, converts acetolactate into acetoin. Regulates leucine and valine biosynthesis by diverting the flux of alpha-acetolactate towards acetoin when the branched-chain amino acids are present in high concentration. This chain is Alpha-acetolactate decarboxylase (aldC), found in Streptococcus thermophilus.